The primary structure comprises 394 residues: Elongation factor Tu (394 aa).

Positions 10 to 204 constitute a tr-type G domain; sequence KPHINIGTIG…AVDDNIPTPE (195 aa). The G1 stretch occupies residues 19 to 26; the sequence is GHVDHGKT. 19–26 is a binding site for GTP; it reads GHVDHGKT. Thr26 serves as a coordination point for Mg(2+). The tract at residues 60-64 is G2; sequence GITIN. Residues 81 to 84 are G3; it reads DCPG. GTP contacts are provided by residues 81 to 85 and 136 to 139; these read DCPGH and NKID. Positions 136–139 are G4; that stretch reads NKID. The interval 174–176 is G5; the sequence is SAL.

It belongs to the TRAFAC class translation factor GTPase superfamily. Classic translation factor GTPase family. EF-Tu/EF-1A subfamily. As to quaternary structure, monomer.

Its subcellular location is the cytoplasm. It carries out the reaction GTP + H2O = GDP + phosphate + H(+). Its function is as follows. GTP hydrolase that promotes the GTP-dependent binding of aminoacyl-tRNA to the A-site of ribosomes during protein biosynthesis. This Chlamydia caviae (strain ATCC VR-813 / DSM 19441 / 03DC25 / GPIC) (Chlamydophila caviae) protein is Elongation factor Tu.